A 400-amino-acid polypeptide reads, in one-letter code: Lysophospholipid transporter LplT (400 aa).

12 helical membrane passes run 19-39, 53-73, 91-111, 139-159, 164-184, 195-213, 227-247, 257-277, 281-301, 304-324, 352-372, and 373-393; these read VIVA…ATLA, VLQM…GQIA, AGAA…LVGI, LMEA…GVLA, IAAL…NLFI, SWRL…VVLW, LFWG…PVAL, YLNA…AKLV, TVSR…IFSL, ALLP…FFVV, NSAM…GVPA, and VAIG…LWIW.

It belongs to the major facilitator superfamily. LplT (TC 2.A.1.42) family.

The protein resides in the cell inner membrane. Its function is as follows. Catalyzes the facilitated diffusion of 2-acyl-glycero-3-phosphoethanolamine (2-acyl-GPE) into the cell. This Salmonella newport (strain SL254) protein is Lysophospholipid transporter LplT.